The sequence spans 87 residues: U15-lycotoxin-Ls1f (87 aa).

Residues 1–20 (MNSKIFAVLLLLGLLSCVLS) form the signal peptide. The WAP domain occupies 21–66 (DQYCPKSSITACKKMNIRNDCCKDDDCTGGSWCCATPCGNFCKYPT). 5 disulfide bridges follow: cysteine 24/cysteine 54, cysteine 32/cysteine 58, cysteine 41/cysteine 53, cysteine 42/cysteine 80, and cysteine 47/cysteine 62.

This sequence belongs to the venom protein 11 family. 01 (wap-1) subfamily. Contains 5 disulfide bonds. Expressed by the venom gland.

It is found in the secreted. Its function is as follows. Has antibacterial activity. The chain is U15-lycotoxin-Ls1f from Lycosa singoriensis (Wolf spider).